A 334-amino-acid chain; its full sequence is S-adenosylmethionine:tRNA ribosyltransferase-isomerase (334 aa).

It belongs to the QueA family. In terms of assembly, monomer.

Its subcellular location is the cytoplasm. The catalysed reaction is 7-aminomethyl-7-carbaguanosine(34) in tRNA + S-adenosyl-L-methionine = epoxyqueuosine(34) in tRNA + adenine + L-methionine + 2 H(+). It participates in tRNA modification; tRNA-queuosine biosynthesis. Functionally, transfers and isomerizes the ribose moiety from AdoMet to the 7-aminomethyl group of 7-deazaguanine (preQ1-tRNA) to give epoxyqueuosine (oQ-tRNA). The chain is S-adenosylmethionine:tRNA ribosyltransferase-isomerase from Thermosipho melanesiensis (strain DSM 12029 / CIP 104789 / BI429).